The following is a 501-amino-acid chain: Glycerol kinase (501 aa).

Thr17 provides a ligand contact to ADP. Thr17, Thr18, and Ser19 together coordinate ATP. Sn-glycerol 3-phosphate is bound at residue Thr17. Arg21 lines the ADP pocket. Positions 87, 88, 139, and 243 each coordinate sn-glycerol 3-phosphate. Arg87, Glu88, Tyr139, Asp243, and Gln244 together coordinate glycerol. Positions 265 and 308 each coordinate ADP. ATP-binding residues include Thr265, Gly308, Gln312, and Gly409. 2 residues coordinate ADP: Gly409 and Asn413.

This sequence belongs to the FGGY kinase family.

The enzyme catalyses glycerol + ATP = sn-glycerol 3-phosphate + ADP + H(+). The protein operates within polyol metabolism; glycerol degradation via glycerol kinase pathway; sn-glycerol 3-phosphate from glycerol: step 1/1. Inhibited by fructose 1,6-bisphosphate (FBP). Its function is as follows. Key enzyme in the regulation of glycerol uptake and metabolism. Catalyzes the phosphorylation of glycerol to yield sn-glycerol 3-phosphate. The protein is Glycerol kinase of Pseudomonas syringae pv. tomato (strain ATCC BAA-871 / DC3000).